The chain runs to 277 residues: Caspase-3 (277 aa).

N-acetylmethionine is present on M1. 2 consecutive propeptides follow at residues 1–9 (MENTENSVD) and 10–28 (AKSF…KSMD). K11 carries the N6-acetyllysine modification. S26 is modified (phosphoserine). Active-site residues include H121 and C163. An S-nitrosocysteine; in inhibited form modification is found at C163.

The protein belongs to the peptidase C14A family. As to quaternary structure, heterotetramer that consists of two anti-parallel arranged heterodimers, each one formed by a 17 kDa (p17) and a 12 kDa (p12) subunit. Interacts with BIRC6/bruce. Cleavage by granzyme B, caspase-6, caspase-8 and caspase-10 generates the two active subunits. Additional processing of the propeptides is likely due to the autocatalytic activity of the activated protease. Active heterodimers between the small subunit of caspase-7 protease and the large subunit of caspase-3 also occur and vice versa. Post-translationally, S-nitrosylated on its catalytic site cysteine in unstimulated cell lines and denitrosylated upon activation of the Fas apoptotic pathway, associated with an increase in intracellular caspase activity. Fas therefore activates caspase-3 not only by inducing the cleavage of the caspase zymogen to its active subunits, but also by stimulating the denitrosylation of its active site thiol. In terms of processing, ubiquitinated by BIRC6; this activity is inhibited by DIABLO/SMAC.

Its subcellular location is the cytoplasm. It catalyses the reaction Strict requirement for an Asp residue at positions P1 and P4. It has a preferred cleavage sequence of Asp-Xaa-Xaa-Asp-|- with a hydrophobic amino-acid residue at P2 and a hydrophilic amino-acid residue at P3, although Val or Ala are also accepted at this position.. Inhibited by BIRC6; following inhibition of BIRC6-caspase binding by DIABLO/SMAC, BIRC6 is subjected to caspase cleavage, leading to an increase in active caspases. Its function is as follows. Involved in the activation cascade of caspases responsible for apoptosis execution. At the onset of apoptosis, it proteolytically cleaves poly(ADP-ribose) polymerase PARP1 at a '216-Asp-|-Gly-217' bond. Cleaves and activates sterol regulatory element binding proteins (SREBPs) between the basic helix-loop-helix leucine zipper domain and the membrane attachment domain. Cleaves and activates caspase-6, -7 and -9 (CASP6, CASP7 and CASP9, respectively). Cleaves and inactivates interleukin-18 (IL18). Triggers cell adhesion in sympathetic neurons through RET cleavage. Cleaves IL-1 beta between an Asp and an Ala, releasing the mature cytokine which is involved in a variety of inflammatory processes. Cleaves and inhibits serine/threonine-protein kinase AKT1 in response to oxidative stress. Acts as an inhibitor of type I interferon production during virus-induced apoptosis by mediating cleavage of antiviral proteins CGAS, IRF3 and MAVS, thereby preventing cytokine overproduction. Also involved in pyroptosis by mediating cleavage and activation of gasdermin-E (GSDME). Cleaves XRCC4 and phospholipid scramblase proteins XKR4, XKR8 and XKR9, leading to promote phosphatidylserine exposure on apoptotic cell surface. Cleaves BIRC6 following inhibition of BIRC6-caspase binding by DIABLO/SMAC. This is Caspase-3 (CASP3) from Canis lupus familiaris (Dog).